The sequence spans 325 residues: Probable cell division protein WhiA (325 aa).

A DNA-binding region (H-T-H motif) is located at residues Ser280–Lys313.

This sequence belongs to the WhiA family.

In terms of biological role, involved in cell division and chromosome segregation. This is Probable cell division protein WhiA from Caldicellulosiruptor saccharolyticus (strain ATCC 43494 / DSM 8903 / Tp8T 6331).